The sequence spans 675 residues: DNA ligase (675 aa).

NAD(+) is bound by residues 43 to 47, 92 to 93, and glutamate 122; these read DYEYD and SM. The active-site N6-AMP-lysine intermediate is lysine 124. NAD(+) is bound by residues arginine 145, glutamate 179, lysine 295, and lysine 319. Positions 413, 416, 431, and 436 each coordinate Zn(2+). Residues 597–675 enclose the BRCT domain; the sequence is SPDGYYKGKK…ETEAIAKFEQ (79 aa).

This sequence belongs to the NAD-dependent DNA ligase family. LigA subfamily. Mg(2+) is required as a cofactor. It depends on Mn(2+) as a cofactor.

It carries out the reaction NAD(+) + (deoxyribonucleotide)n-3'-hydroxyl + 5'-phospho-(deoxyribonucleotide)m = (deoxyribonucleotide)n+m + AMP + beta-nicotinamide D-nucleotide.. DNA ligase that catalyzes the formation of phosphodiester linkages between 5'-phosphoryl and 3'-hydroxyl groups in double-stranded DNA using NAD as a coenzyme and as the energy source for the reaction. It is essential for DNA replication and repair of damaged DNA. The polypeptide is DNA ligase (Pediococcus pentosaceus (strain ATCC 25745 / CCUG 21536 / LMG 10740 / 183-1w)).